The chain runs to 565 residues: MRLYPLVWLFLAACTAWGYPSSPPVVNTVKGKVLGKYVNLEGFAQPVAVFLGIPFAKPPLGSLRFAPPQPAEPWNFVKNTTSYPPMCSQDAVGGQVLSELFTNRKENIPLQFSEDCLYLNVYTPADLTKNSRLPVMVWIHGGGLVVGGASTYDGQVLSAHENVVVVTIQYRLGIWGFFSTGDEHSQGNWGHLDQVAALHWVQDNIANFGGNPGSVTIFGESAGGFSVSALVLSPLAKNLFHRAISESGVVLTSALITTDSKPIANLIATLSGCKTTTSAVMVHCLRQKTEDELLETSLKLNLFKLDLLGNPKESYPFLPTVIDGVVLPKTPEEILAEKSFNTVPYIVGINKQEFGWIIPTLMGYPLSEGKLDQKTAKSLLWKSYPTLKISEKMIPVVAEKYFGGTDDPAKRKDLFQDLVADVMFGVPSVMVSRSHRDAGAPTFMYEFEYRPSFVSAMRPKTVIGDHGDELFSVFGSPFLKDGASEEETNLSKMVMKYWANFARNGNPNGGGLPHWPEYDQKEGYLKIGASTQAAQRLKDKEVAFWSELRAKEAAEEPSHWKHVEL.

The N-terminal stretch at 1–18 is a signal peptide; the sequence is MRLYPLVWLFLAACTAWG. The N-linked (GlcNAc...) asparagine glycan is linked to Asn79. Cys87 and Cys116 are disulfide-bonded. Ser221 (acyl-ester intermediate) is an active-site residue. Cys273 and Cys284 are joined by a disulfide. The Charge relay system role is filled by Glu353. The residue at position 382 (Lys382) is an N6-succinyllysine. The active-site Charge relay system is His466. An N-linked (GlcNAc...) asparagine glycan is attached at Asn489. The Prevents secretion from ER motif lies at 562–565; the sequence is HVEL.

It belongs to the type-B carboxylesterase/lipase family. In terms of assembly, homotrimer. As to expression, detected in liver, lung and testis, but not in kidney (at protein level).

Its subcellular location is the endoplasmic reticulum lumen. It is found in the cytoplasm. The protein resides in the cytosol. It localises to the lipid droplet. The protein localises to the microsome. It carries out the reaction all-trans-retinyl hexadecanoate + H2O = all-trans-retinol + hexadecanoate + H(+). The catalysed reaction is a carboxylic ester + H2O = an alcohol + a carboxylate + H(+). It catalyses the reaction a long-chain fatty acyl ethyl ester + H2O = a long-chain fatty acid + ethanol + H(+). With respect to regulation, FAEE-synthesizing and PNPB-hydrolyzing activities are both inhibited by DFP. Functionally, major lipase in white adipose tissue. Involved in the metabolism of xenobiotics and of natural substrates. Hydrolyzes triacylglycerols and monoacylglycerols, with a preference for monoacylglycerols. The susceptibility of the substrate increases with decreasing acyl chain length of the fatty acid moiety. Catalyzes the synthesis of fatty acid ethyl esters. Hydrolyzes retinyl esters. The polypeptide is Carboxylesterase 1D (Rattus norvegicus (Rat)).